A 71-amino-acid polypeptide reads, in one-letter code: Small ribosomal subunit protein bS21 (71 aa).

Residues 39-71 (EKPTQERKRKAAAAVKRQLRRSSRDVTKRQRLY) are disordered. Basic residues predominate over residues 45 to 59 (RKRKAAAAVKRQLRR). Residues 60–71 (SSRDVTKRQRLY) are compositionally biased toward basic and acidic residues.

The protein belongs to the bacterial ribosomal protein bS21 family.

The chain is Small ribosomal subunit protein bS21 from Stenotrophomonas maltophilia (strain K279a).